The chain runs to 431 residues: tRNA (adenine(37)-N6)-methyltransferase (431 aa).

In terms of domain architecture, TsaA-like spans 30-168 (TEPIGYLESC…YIADYDSPQN (139 aa)). S-adenosyl-L-methionine contacts are provided by residues 47–49 (PRQ), 90–91 (HK), arginine 117, leucine 127, and 148–151 (IHGT). Disordered stretches follow at residues 167 to 189 (QNLE…ATAN) and 201 to 243 (KAQP…DRER). Over residues 207 to 243 (STKEKPKCREHRTSDENSQKFRDTSEIQHTLPEDRER) the composition is skewed to basic and acidic residues.

Belongs to the tRNA methyltransferase O family.

It catalyses the reaction N(6)-L-threonylcarbamoyladenosine(37) in tRNA + S-adenosyl-L-methionine = N(6)-methyl,N(6)-L-threonylcarbamoyladenosine(37) in tRNA + S-adenosyl-L-homocysteine + H(+). In terms of biological role, S-adenosyl-L-methionine-dependent methyltransferase responsible for the addition of the methyl group in the formation of N6-methyl-N6-threonylcarbamoyladenosine at position 37 (m(6)t(6)A37) of the tRNA anticodon loop of tRNA(Ser)(GCU). The methyl group of m(6)t(6)A37 may improve the efficiency of the tRNA decoding ability. May bind to tRNA. This is tRNA (adenine(37)-N6)-methyltransferase from Rattus norvegicus (Rat).